A 378-amino-acid polypeptide reads, in one-letter code: Queuine tRNA-ribosyltransferase (378 aa).

Asp-92 acts as the Proton acceptor in catalysis. Substrate contacts are provided by residues 92–96 (DSGGF), Asp-146, Gln-188, and Gly-215. The RNA binding stretch occupies residues 246–252 (GVGTHLE). Asp-265 functions as the Nucleophile in the catalytic mechanism. Residues 270 to 274 (TRLAR) form an RNA binding; important for wobble base 34 recognition region. Positions 303, 305, 308, and 334 each coordinate Zn(2+).

The protein belongs to the queuine tRNA-ribosyltransferase family. Homodimer. Within each dimer, one monomer is responsible for RNA recognition and catalysis, while the other monomer binds to the replacement base PreQ1. Zn(2+) is required as a cofactor.

The enzyme catalyses 7-aminomethyl-7-carbaguanine + guanosine(34) in tRNA = 7-aminomethyl-7-carbaguanosine(34) in tRNA + guanine. The protein operates within tRNA modification; tRNA-queuosine biosynthesis. Its function is as follows. Catalyzes the base-exchange of a guanine (G) residue with the queuine precursor 7-aminomethyl-7-deazaguanine (PreQ1) at position 34 (anticodon wobble position) in tRNAs with GU(N) anticodons (tRNA-Asp, -Asn, -His and -Tyr). Catalysis occurs through a double-displacement mechanism. The nucleophile active site attacks the C1' of nucleotide 34 to detach the guanine base from the RNA, forming a covalent enzyme-RNA intermediate. The proton acceptor active site deprotonates the incoming PreQ1, allowing a nucleophilic attack on the C1' of the ribose to form the product. After dissociation, two additional enzymatic reactions on the tRNA convert PreQ1 to queuine (Q), resulting in the hypermodified nucleoside queuosine (7-(((4,5-cis-dihydroxy-2-cyclopenten-1-yl)amino)methyl)-7-deazaguanosine). This chain is Queuine tRNA-ribosyltransferase, found in Thermosynechococcus vestitus (strain NIES-2133 / IAM M-273 / BP-1).